The following is a 260-amino-acid chain: Carbonic anhydrase 2 (260 aa).

Position 2 is an N-acetylserine (Ser-2). Ser-2 carries the post-translational modification Phosphoserine. The Alpha-carbonic anhydrase domain maps to 3–259 (HHWGYGKHNG…LKNRQVRGFP (257 aa)). His-64 (proton donor/acceptor) is an active-site residue. Zn(2+) contacts are provided by His-94, His-96, and His-119. 2 positions are modified to phosphoserine: Ser-165 and Ser-172. 198–199 (TT) contributes to the substrate binding site.

The protein belongs to the alpha-carbonic anhydrase family. Interacts with SLC4A4. Interaction with SLC4A7 regulates SLC4A7 transporter activity. The cofactor is Zn(2+).

The protein localises to the cytoplasm. The protein resides in the cell membrane. The catalysed reaction is hydrogencarbonate + H(+) = CO2 + H2O. The enzyme catalyses urea = cyanamide + H2O. With respect to regulation, inhibited by acetazolamide. Its function is as follows. Catalyzes the reversible hydration of carbon dioxide. Can also hydrate cyanamide to urea. Involved in the regulation of fluid secretion into the anterior chamber of the eye. Essential for bone resorption and osteoclast differentiation. Contributes to intracellular pH regulation in the duodenal upper villous epithelium during proton-coupled peptide absorption. Stimulates the chloride-bicarbonate exchange activity of SLC26A6. This Bos taurus (Bovine) protein is Carbonic anhydrase 2 (CA2).